A 227-amino-acid polypeptide reads, in one-letter code: 7-cyano-7-deazaguanine synthase (227 aa).

8-18 is a binding site for ATP; the sequence is FSGGQDSTTCL. Residues cysteine 187, cysteine 196, cysteine 199, and cysteine 202 each coordinate Zn(2+).

It belongs to the QueC family. Requires Zn(2+) as cofactor.

The catalysed reaction is 7-carboxy-7-deazaguanine + NH4(+) + ATP = 7-cyano-7-deazaguanine + ADP + phosphate + H2O + H(+). It functions in the pathway purine metabolism; 7-cyano-7-deazaguanine biosynthesis. In terms of biological role, catalyzes the ATP-dependent conversion of 7-carboxy-7-deazaguanine (CDG) to 7-cyano-7-deazaguanine (preQ(0)). This is 7-cyano-7-deazaguanine synthase from Aliivibrio fischeri (strain MJ11) (Vibrio fischeri).